The primary structure comprises 21 residues: Thylakoid lumenal 13.8 kDa protein (21 aa).

The protein resides in the plastid. It localises to the chloroplast thylakoid lumen. The protein is Thylakoid lumenal 13.8 kDa protein of Spinacia oleracea (Spinach).